Reading from the N-terminus, the 669-residue chain is Soluble guanylate cyclase 89Db (669 aa).

Histidine 104 serves as a coordination point for heme. Residues 430–458 (QHCSKLEIMFEKEEQRSDELEKSLELADS) adopt a coiled-coil conformation. Positions 494 to 620 (SVIFIEVMNI…DTVNTASRME (127 aa)) constitute a Guanylate cyclase domain.

This sequence belongs to the adenylyl cyclase class-4/guanylyl cyclase family. As to quaternary structure, heterodimer; with Gyc88E, in the presence of magnesium or manganese. Heme serves as cofactor. Expressed in embryos in a segmental pattern in the ventral nerve cord (VNC) and in the brain, beginning at stage 13 and continuing through to stage 17. Colocalized with Gyc-89Db in several peripheral neurons that innervate trachea, basiconical sensilla and the sensory cones in the posterior segments of the embryo. Expression in wandering 3rd instar larvae is most prominent in a small cluster of cells located in the anterior medial region of each brain lobe. In the VNC, expression is found in scattered cells both laterally and at the midline.

It is found in the cytoplasm. The enzyme catalyses GTP = 3',5'-cyclic GMP + diphosphate. Its activity is regulated as follows. Probably not activated by nitric oxide (NO). Heterodimer exhibits some stimulation, compounds (SIN-1 and two of the NONOates) that were ineffective at stimulating Gyc-88E homodimer did stimulate the heterodimer. Heterodimers with Gyc88E are activated in response to changing oxygen concentrations, alerting flies to hypoxic environments. Under normal oxygen concentrations, oxygen binds to the heme group and results in low levels of guanylyl cyclase activity. When exposed to reduced oxygen concentrations, the oxygen dissociates from the heme group resulting in activation of the enzyme. This is Soluble guanylate cyclase 89Db from Drosophila melanogaster (Fruit fly).